An 88-amino-acid polypeptide reads, in one-letter code: HssA/B-like protein 9 (88 aa).

Polar residues predominate over residues 1-14; it reads MSILSALTSISNPM. Positions 1–26 are disordered; the sequence is MSILSALTSISNPMKSSKSSVANGGG.

Belongs to the hssA/B family.

This is HssA/B-like protein 9 (hssl9) from Dictyostelium discoideum (Social amoeba).